Reading from the N-terminus, the 215-residue chain is UPF0502 protein YceH (215 aa).

Residue K80 is modified to N6-acetyllysine.

This sequence belongs to the UPF0502 family.

The polypeptide is UPF0502 protein YceH (Escherichia coli O157:H7).